A 106-amino-acid chain; its full sequence is Large ribosomal subunit protein bL21 (106 aa).

The protein belongs to the bacterial ribosomal protein bL21 family. Part of the 50S ribosomal subunit. Contacts protein L20.

This protein binds to 23S rRNA in the presence of protein L20. The chain is Large ribosomal subunit protein bL21 from Xanthomonas campestris pv. campestris (strain ATCC 33913 / DSM 3586 / NCPPB 528 / LMG 568 / P 25).